The chain runs to 490 residues: MVPVVALVGRPNVGKSTLFNRLTRTRDALVADFPGLTRDRKYGRAEIEGREFICIDTGGIDGTEDGVETRMAEQSLLAIEEADVVLFMVDARAGLMPADEAIAKHLRSREKPTFLVANKTDGLDPDQAVVDFYALGLGEIYPIAASHGRGVLSLLEHVLLPWMEDLAPQEEVDEDAEYWAQFEAEENGEEEEEDDFDPQSLPIKLAIVGRPNVGKSTLTNRILGEERVVVYDMPGTTRDSIYIPMERDGREYVLIDTAGVRKRGKITDAVEKFSVIKTLQAIEDANVVMLVIDAREGISDQDLSLLGFILNSGRSLVIVVNKWDGLSQEVKEQVKETLDFRLGFIDFARVHFISALHGSGVGNLFESVREAYDSSTRRVGTSMLTRIMTMAVEDHQPPLVRGRRVKLKYAHAGGYNPPIVVIHGNQVKDLPDSYKRYLMNYFRKSLDVMGSPIRIQFKEGENPYANKRNTLTPTQMRKRKRLMKHIKKSK.

2 EngA-type G domains span residues 3-166 (PVVA…MEDL) and 203-376 (IKLA…DSST). GTP contacts are provided by residues 9–16 (GRPNVGKS), 56–60 (DTGGI), 118–121 (NKTD), 209–216 (GRPNVGKS), 256–260 (DTAGV), and 321–324 (NKWD). Residues 377–461 (RRVGTSMLTR…PIRIQFKEGE (85 aa)) enclose the KH-like domain.

This sequence belongs to the TRAFAC class TrmE-Era-EngA-EngB-Septin-like GTPase superfamily. EngA (Der) GTPase family. In terms of assembly, associates with the 50S ribosomal subunit.

In terms of biological role, GTPase that plays an essential role in the late steps of ribosome biogenesis. The protein is GTPase Der of Escherichia coli O7:K1 (strain IAI39 / ExPEC).